A 93-amino-acid polypeptide reads, in one-letter code: UPF0358 protein lwe1048 (93 aa).

Belongs to the UPF0358 family.

The sequence is that of UPF0358 protein lwe1048 from Listeria welshimeri serovar 6b (strain ATCC 35897 / DSM 20650 / CCUG 15529 / CIP 8149 / NCTC 11857 / SLCC 5334 / V8).